We begin with the raw amino-acid sequence, 707 residues long: Acetyl-coenzyme A synthetase 1 (707 aa).

CoA is bound by residues 242 to 245 (RGGK) and Thr361. ATP-binding positions include 437–439 (GEP), 461–466 (DTYWQT), Asp553, and Arg568. Ser576 lines the CoA pocket. Residue Arg579 participates in ATP binding. Arg644 provides a ligand contact to CoA. Residues 705–707 (VKL) carry the Microbody targeting signal motif.

This sequence belongs to the ATP-dependent AMP-binding enzyme family.

The protein localises to the microsome. Its subcellular location is the endoplasmic reticulum. It catalyses the reaction acetate + ATP + CoA = acetyl-CoA + AMP + diphosphate. Functionally, may be required for assimilation of ethanol and acetate. This is Acetyl-coenzyme A synthetase 1 (ACS1) from Kluyveromyces lactis (strain ATCC 8585 / CBS 2359 / DSM 70799 / NBRC 1267 / NRRL Y-1140 / WM37) (Yeast).